The chain runs to 236 residues: Phosphatidylserine decarboxylase proenzyme (236 aa).

S203 (schiff-base intermediate with substrate; via pyruvic acid) is an active-site residue. The residue at position 203 (S203) is a Pyruvic acid (Ser); by autocatalysis.

It belongs to the phosphatidylserine decarboxylase family. PSD-A subfamily. As to quaternary structure, heterodimer of a large membrane-associated beta subunit and a small pyruvoyl-containing alpha subunit. It depends on pyruvate as a cofactor. Post-translationally, is synthesized initially as an inactive proenzyme. Formation of the active enzyme involves a self-maturation process in which the active site pyruvoyl group is generated from an internal serine residue via an autocatalytic post-translational modification. Two non-identical subunits are generated from the proenzyme in this reaction, and the pyruvate is formed at the N-terminus of the alpha chain, which is derived from the carboxyl end of the proenzyme. The post-translation cleavage follows an unusual pathway, termed non-hydrolytic serinolysis, in which the side chain hydroxyl group of the serine supplies its oxygen atom to form the C-terminus of the beta chain, while the remainder of the serine residue undergoes an oxidative deamination to produce ammonia and the pyruvoyl prosthetic group on the alpha chain.

The protein resides in the cell membrane. It catalyses the reaction a 1,2-diacyl-sn-glycero-3-phospho-L-serine + H(+) = a 1,2-diacyl-sn-glycero-3-phosphoethanolamine + CO2. Its pathway is phospholipid metabolism; phosphatidylethanolamine biosynthesis; phosphatidylethanolamine from CDP-diacylglycerol: step 2/2. Its function is as follows. Catalyzes the formation of phosphatidylethanolamine (PtdEtn) from phosphatidylserine (PtdSer). This Saccharopolyspora erythraea (strain ATCC 11635 / DSM 40517 / JCM 4748 / NBRC 13426 / NCIMB 8594 / NRRL 2338) protein is Phosphatidylserine decarboxylase proenzyme.